We begin with the raw amino-acid sequence, 245 residues long: 4-hydroxy-tetrahydrodipicolinate reductase (245 aa).

Residues 7–12, 75–77, and 102–105 each bind NAD(+); these read GAKGKV, GTT, and APNF. Histidine 132 acts as the Proton donor/acceptor in catalysis. Histidine 133 serves as a coordination point for (S)-2,3,4,5-tetrahydrodipicolinate. Lysine 136 (proton donor) is an active-site residue. 142–143 is a (S)-2,3,4,5-tetrahydrodipicolinate binding site; sequence GT.

The protein belongs to the DapB family.

The protein localises to the cytoplasm. It catalyses the reaction (S)-2,3,4,5-tetrahydrodipicolinate + NAD(+) + H2O = (2S,4S)-4-hydroxy-2,3,4,5-tetrahydrodipicolinate + NADH + H(+). The enzyme catalyses (S)-2,3,4,5-tetrahydrodipicolinate + NADP(+) + H2O = (2S,4S)-4-hydroxy-2,3,4,5-tetrahydrodipicolinate + NADPH + H(+). It participates in amino-acid biosynthesis; L-lysine biosynthesis via DAP pathway; (S)-tetrahydrodipicolinate from L-aspartate: step 4/4. Its function is as follows. Catalyzes the conversion of 4-hydroxy-tetrahydrodipicolinate (HTPA) to tetrahydrodipicolinate. In Mycobacterium marinum (strain ATCC BAA-535 / M), this protein is 4-hydroxy-tetrahydrodipicolinate reductase.